A 377-amino-acid chain; its full sequence is Acetylornithine aminotransferase (377 aa).

Pyridoxal 5'-phosphate contacts are provided by residues 94 to 95 and Phe-121; that span reads GT. Arg-124 contacts N(2)-acetyl-L-ornithine. Pyridoxal 5'-phosphate is bound at residue 206–209; it reads DEIQ. Residue Lys-235 is modified to N6-(pyridoxal phosphate)lysine. Residue Ser-263 participates in N(2)-acetyl-L-ornithine binding. Thr-264 contributes to the pyridoxal 5'-phosphate binding site.

It belongs to the class-III pyridoxal-phosphate-dependent aminotransferase family. ArgD subfamily. As to quaternary structure, homodimer. Pyridoxal 5'-phosphate is required as a cofactor.

The protein localises to the cytoplasm. It carries out the reaction N(2)-acetyl-L-ornithine + 2-oxoglutarate = N-acetyl-L-glutamate 5-semialdehyde + L-glutamate. Its pathway is amino-acid biosynthesis; L-arginine biosynthesis; N(2)-acetyl-L-ornithine from L-glutamate: step 4/4. The sequence is that of Acetylornithine aminotransferase from Lactococcus lactis subsp. lactis (strain IL1403) (Streptococcus lactis).